The following is a 90-amino-acid chain: N(2)-fixation sustaining protein CowN (90 aa).

It belongs to the CowN family.

Functionally, is required to sustain N(2)-dependent growth in the presence of low levels of carbon monoxide (CO). Probably acts by protecting the N(2) fixation ability of the nitrogenase complex, which is inactivated in the presence of CO. The polypeptide is N(2)-fixation sustaining protein CowN (Halorhodospira halophila (strain DSM 244 / SL1) (Ectothiorhodospira halophila (strain DSM 244 / SL1))).